The following is a 500-amino-acid chain: Zinc finger and BTB domain-containing protein 34 (500 aa).

Residues 32-96 (CDIIVHIQGQ…CYTGRMSLQL (65 aa)) form the BTB domain. A Phosphoserine modification is found at S164. Residues 164-209 (SPPYCSQGRQPTASSDLRMETTPSKALRSRLQEEGHSDRGSSGSVS) form a disordered region. The span at 193 to 202 (RLQEEGHSDR) shows a compositional bias: basic and acidic residues. Residues K235 and K237 each participate in a glycyl lysine isopeptide (Lys-Gly) (interchain with G-Cter in SUMO2) cross-link. A compositionally biased stretch (basic and acidic residues) spans 236 to 245 (VKMEKSDRPS). Disordered regions lie at residues 236–256 (VKME…GDDG) and 341–360 (SDSE…RERS). 2 consecutive C2H2-type zinc fingers follow at residues 372–394 (LICI…MRLH) and 400–422 (FVCK…IRGH). K426 participates in a covalent cross-link: Glycyl lysine isopeptide (Lys-Gly) (interchain with G-Cter in SUMO2). The C2H2-type 3 zinc finger occupies 428-451 (FRCEICGKCFPFQGTLNQHLRKNH). S463 is modified (phosphoserine). K474 is covalently cross-linked (Glycyl lysine isopeptide (Lys-Gly) (interchain with G-Cter in SUMO2)). The segment at 478-500 (DASASEMGLDSRMEIHTVSDAPD) is disordered.

As to expression, expressed in several tissues, including heart, brain, thymus, skeletal muscle, small intestine, testis, kidney, placenta, peripheral blood cells and adult and fetal liver.

The protein localises to the nucleus. Its function is as follows. May be a transcriptional repressor. In Homo sapiens (Human), this protein is Zinc finger and BTB domain-containing protein 34 (ZBTB34).